The sequence spans 379 residues: Cytochrome b (379 aa).

Transmembrane regions (helical) follow at residues 33-53 (FGSLLGMCLIIQILTGLFLAM), 77-98 (WLIRYLHANGASMFFICLFIHV), 113-133 (WNIGIILFLTTMATAFVGYVL), and 178-198 (FFAFHFILPFIIAAFALVHLL). Heme b is bound by residues H83 and H97. Heme b contacts are provided by H182 and H196. Position 201 (H201) interacts with a ubiquinone. 4 consecutive transmembrane segments (helical) span residues 226-246 (TKDLLGIFLLLLVLMILVLFF), 288-308 (LGGVLALVLSILILAAFPLLN), 320-340 (VTQVIYWIFIANLLVLTWIGG), and 347-367 (FTTIGQIASITYFAIIIILIP).

It belongs to the cytochrome b family. The cytochrome bc1 complex contains 11 subunits: 3 respiratory subunits (MT-CYB, CYC1 and UQCRFS1), 2 core proteins (UQCRC1 and UQCRC2) and 6 low-molecular weight proteins (UQCRH/QCR6, UQCRB/QCR7, UQCRQ/QCR8, UQCR10/QCR9, UQCR11/QCR10 and a cleavage product of UQCRFS1). This cytochrome bc1 complex then forms a dimer. Heme b serves as cofactor.

It localises to the mitochondrion inner membrane. Functionally, component of the ubiquinol-cytochrome c reductase complex (complex III or cytochrome b-c1 complex) that is part of the mitochondrial respiratory chain. The b-c1 complex mediates electron transfer from ubiquinol to cytochrome c. Contributes to the generation of a proton gradient across the mitochondrial membrane that is then used for ATP synthesis. This is Cytochrome b (MT-CYB) from Akodon cursor (Cursor grass mouse).